Consider the following 93-residue polypeptide: Small ribosomal subunit protein uS19 (93 aa).

It belongs to the universal ribosomal protein uS19 family.

Its function is as follows. Protein S19 forms a complex with S13 that binds strongly to the 16S ribosomal RNA. The chain is Small ribosomal subunit protein uS19 from Geotalea daltonii (strain DSM 22248 / JCM 15807 / FRC-32) (Geobacter daltonii).